Reading from the N-terminus, the 340-residue chain is Guanine nucleotide-binding protein G(I)/G(S)/G(T) subunit beta-3 (340 aa).

WD repeat units lie at residues 53-83, 95-125, 141-170, 182-212, 224-254, 268-298, and 310-340; these read GHLA…IVWD, LRSS…SIYS, AHTG…ALWD, GHTG…KLWD, GHES…RLFD, SIIC…NIWD, and GHDN…KVWN.

It belongs to the WD repeat G protein beta family. In terms of assembly, g proteins are composed of 3 units, alpha, beta and gamma. Interacts with RASD2.

It is found in the cytoplasm. The protein localises to the perinuclear region. Functionally, guanine nucleotide-binding proteins (G proteins) are involved as a modulator or transducer in various transmembrane signaling systems. The beta and gamma chains are required for the GTPase activity, for replacement of GDP by GTP, and for G protein-effector interaction. The polypeptide is Guanine nucleotide-binding protein G(I)/G(S)/G(T) subunit beta-3 (GNB3) (Canis lupus familiaris (Dog)).